Here is a 270-residue protein sequence, read N- to C-terminus: tRNA pseudouridine synthase A (270 aa).

Asp60 acts as the Nucleophile in catalysis. The RNA binding stretch occupies residues 107–111 (FHARF). Tyr118 provides a ligand contact to substrate. The interaction with tRNA stretch occupies residues 168–172 (QCQSR).

It belongs to the tRNA pseudouridine synthase TruA family. As to quaternary structure, homodimer.

It carries out the reaction uridine(38/39/40) in tRNA = pseudouridine(38/39/40) in tRNA. Its function is as follows. Formation of pseudouridine at positions 38, 39 and 40 in the anticodon stem and loop of transfer RNAs. The protein is tRNA pseudouridine synthase A of Shigella sonnei (strain Ss046).